A 132-amino-acid chain; its full sequence is Histone H2B.1 (132 aa).

Low complexity predominate over residues Met1–Ala13. Positions Met1–Lys39 are disordered. An N6-acetyllysine; alternate modification is found at Lys7. Lys7 participates in a covalent cross-link: Glycyl lysine isopeptide (Lys-Gly) (interchain with G-Cter in SUMO); alternate. At Ser11 the chain carries Phosphoserine. Lys12 bears the N6-acetyllysine mark. Lys17 is modified (N6-acetyllysine; alternate). Residue Lys17 forms a Glycyl lysine isopeptide (Lys-Gly) (interchain with G-Cter in SUMO); alternate linkage. Lys18 is covalently cross-linked (Glycyl lysine isopeptide (Lys-Gly) (interchain with G-Cter in SUMO)). Lys125 is covalently cross-linked (Glycyl lysine isopeptide (Lys-Gly) (interchain with G-Cter in ubiquitin)).

The protein belongs to the histone H2B family. As to quaternary structure, the nucleosome is a histone octamer containing two molecules each of H2A, H2B, H3 and H4 assembled in one H3-H4 heterotetramer and two H2A-H2B heterodimers. The octamer wraps approximately 147 bp of DNA. In terms of processing, monoubiquitinated by the UBC2-BRE1 complex to form H2BK123ub1. H2BK123ub1 gives a specific tag for epigenetic transcriptional activation and is also prerequisite for H3K4me and H3K79me formation. H2BK123ub1 also modulates the formation of double-strand breaks during meiosis and is a prerequisite for DNA-damage checkpoint activation. Post-translationally, phosphorylated by STE20 to form H2BS10ph during progression through meiotic prophase. May be correlated with chromosome condensation. Acetylated by GCN5 to form H2BK11ac and H2BK16ac. H2BK16ac can also be formed by ESA1. Acetylation of N-terminal lysines and particularly formation of H2BK11acK16ac has a positive effect on transcription. In terms of processing, sumoylation to form H2BK6su and probably also H2BK16su or H2BK17su, occurs preferentially near the telomeres and represses gene transcription.

Its subcellular location is the nucleus. It localises to the chromosome. Its function is as follows. Core component of nucleosome. Nucleosomes wrap and compact DNA into chromatin, limiting DNA accessibility to the cellular machineries which require DNA as a template. Histones thereby play a central role in transcription regulation, DNA repair, DNA replication and chromosomal stability. DNA accessibility is regulated via a complex set of post-translational modifications of histones, also called histone code, and nucleosome remodeling. The polypeptide is Histone H2B.1 (HTB1) (Kluyveromyces lactis (strain ATCC 8585 / CBS 2359 / DSM 70799 / NBRC 1267 / NRRL Y-1140 / WM37) (Yeast)).